The following is a 229-amino-acid chain: Large ribosomal subunit protein uL1 (229 aa).

It belongs to the universal ribosomal protein uL1 family. In terms of assembly, part of the 50S ribosomal subunit.

Binds directly to 23S rRNA. The L1 stalk is quite mobile in the ribosome, and is involved in E site tRNA release. Functionally, protein L1 is also a translational repressor protein, it controls the translation of the L11 operon by binding to its mRNA. The polypeptide is Large ribosomal subunit protein uL1 (Streptococcus equi subsp. equi (strain 4047)).